The following is a 289-amino-acid chain: Phosphoribulokinase (289 aa).

12-20 (GSSGAGTTT) provides a ligand contact to ATP.

It belongs to the phosphoribulokinase family.

It catalyses the reaction D-ribulose 5-phosphate + ATP = D-ribulose 1,5-bisphosphate + ADP + H(+). It functions in the pathway carbohydrate biosynthesis; Calvin cycle. The protein is Phosphoribulokinase (cbbP) of Rhizobium meliloti (strain 1021) (Ensifer meliloti).